The following is a 260-amino-acid chain: Carbonic anhydrase 2 (260 aa).

Residue Ser2 is modified to N-acetylserine. Ser2 is modified (phosphoserine). Residues His3–Phe259 enclose the Alpha-carbonic anhydrase domain. The active-site Proton donor/acceptor is the His64. Zn(2+)-binding residues include His94, His96, and His119. Residues Ser165 and Ser172 each carry the phosphoserine modification. Thr198–Thr199 is a binding site for substrate.

The protein belongs to the alpha-carbonic anhydrase family. As to quaternary structure, interacts with SLC4A4 and SLC26A6. Interaction with SLC4A7 regulates SLC4A7 transporter activity. Zn(2+) serves as cofactor.

The protein localises to the cytoplasm. Its subcellular location is the cell membrane. The catalysed reaction is hydrogencarbonate + H(+) = CO2 + H2O. The enzyme catalyses urea = cyanamide + H2O. With respect to regulation, inhibited by acetazolamide. Catalyzes the reversible hydration of carbon dioxide. Can also hydrate cyanamide to urea. Involved in the regulation of fluid secretion into the anterior chamber of the eye. Essential for bone resorption and osteoclast differentiation. Contributes to intracellular pH regulation in the duodenal upper villous epithelium during proton-coupled peptide absorption. Stimulates the chloride-bicarbonate exchange activity of SLC26A6. The sequence is that of Carbonic anhydrase 2 (CA2) from Oryctolagus cuniculus (Rabbit).